A 428-amino-acid chain; its full sequence is MKLIKYPDRSQWNEILKRPVLETENLFDTVRNIINRVRAGGDRVVMEYEAVFDKAELTSLAVTSAEIEEAEKEVPIELKAAIYLAKRNIETFHSAQRFEGKKVDTMEGVTCWQKAVAIEKVGLYIPGGTAPLFSTVLMLAIPAKIAGCKEIVLCTPPDKNGKVHPAILFAARLAGVSKIFKAGGVQAIAAMAYGTESIPKVYKIFGPGNQYVTAAKQLVSLRDVAIDMPAGPSEVEVLADESANPVFVAADLLSQAEHGVDSQAMLVTTSEKLQTEVVYEVERQLGYLTRRDIAEKSLASSKLILVKDMEEALELTNAYAPEHLIIETKDYMEVAGQIVNAGSVFLGAFSPESAGDYASGTNHTLPTNGYAKAYSGVSLDSFIRKITFQEILPSGMSAIGPAIEVMAANEHLDAHKNAVTVRLEEIRK.

Tyr124, Gln186, and Asn209 together coordinate NAD(+). Substrate-binding residues include Ser233, Gln255, and His258. Zn(2+)-binding residues include Gln255 and His258. Residues Glu322 and His323 each act as proton acceptor in the active site. Substrate-binding residues include His323, Asp356, Glu410, and His415. Zn(2+) is bound at residue Asp356. Residue His415 participates in Zn(2+) binding.

Belongs to the histidinol dehydrogenase family. The cofactor is Zn(2+).

It carries out the reaction L-histidinol + 2 NAD(+) + H2O = L-histidine + 2 NADH + 3 H(+). It participates in amino-acid biosynthesis; L-histidine biosynthesis; L-histidine from 5-phospho-alpha-D-ribose 1-diphosphate: step 9/9. Catalyzes the sequential NAD-dependent oxidations of L-histidinol to L-histidinaldehyde and then to L-histidine. The sequence is that of Histidinol dehydrogenase from Bacteroides fragilis (strain ATCC 25285 / DSM 2151 / CCUG 4856 / JCM 11019 / LMG 10263 / NCTC 9343 / Onslow / VPI 2553 / EN-2).